Here is a 218-residue protein sequence, read N- to C-terminus: Putative inactive cathepsin L-like protein CTSL3P (218 aa).

Disordered stretches follow at residues G144–Q173 and G195–V218. Over residues E201 to L212 the composition is skewed to basic and acidic residues.

The protein belongs to the peptidase C1 family.

The sequence is that of Putative inactive cathepsin L-like protein CTSL3P (CTSL3P) from Homo sapiens (Human).